The sequence spans 3122 residues: tRNA nuclease CdiA-2 (3122 aa).

The two-partner system transport domain (TPS) stretch occupies residues 36-205 (RAGVVPAWLS…ATLTTGNPNF (170 aa)). A helical transmembrane segment spans residues 54-74 (VALAVLVAAGVVPIWVNAQVV). Residues 256-1254 (VVAGSNQVDY…GGSVAIQASG (999 aa)) form an FHA-1 region. The tract at residues 492–512 (GMTLGGGSLSNQGGRANSQGP) is disordered. Polar residues predominate over residues 500-512 (LSNQGGRANSQGP). The tract at residues 1345 to 1635 (TRRVMQTSGN…SATAVNVLSN (291 aa)) is receptor binding domain (RBD). Residues 1790–1845 (TAGNIDLKNTQVFTNSGTVKADTTLALQGKQIDNAFGALQSGGLTSLDTTGNVDLT) form a periplasmic FHA-1 repeat (pFR) region. Residues 1947–2085 (SDTDLNSATG…TERHVYNSRE (139 aa)) are FHA-2. 3 disordered regions span residues 2002–2031 (TSTINANSSGDQGNRSYAETRHGSDQALTG), 2151–2174 (TTSQDTSQSSTTYQEQHSGLMSGG), and 2325–2352 (IGVQVSVGSSHSSMQSSEDQTIQRGSSI). The interval 2086 to 2825 (THSRSGVVSG…SAGAAMASNV (740 aa)) is pretoxin (PT) domain. Low complexity-rich tracts occupy residues 2151-2170 (TTSQDTSQSSTTYQEQHSGL) and 2325-2341 (IGVQVSVGSSHSSMQSS). Residues 2342–2352 (EDQTIQRGSSI) show a composition bias toward polar residues. A C-terminal effector domain (CT), has tRNA nuclease activity region spans residues 2821-3122 (MASNVELYNA…NITIIKPKGN (302 aa)). The ELYN C-terminal motif motif lies at 2826-2829 (ELYN). The disordered stretch occupies residues 2948–3000 (GATDRTPPSNAILSNSNSDNNSTQGSQSGTVTKTPNPEATGSLSGKPTQIPPL). The interval 2948–3122 (GATDRTPPSN…NITIIKPKGN (175 aa)) is truncated CT domain, has tRNA nuclease activity, sufficient for interaction with CdiI-2. Positions 2953–2994 (TPPSNAILSNSNSDNNSTQGSQSGTVTKTPNPEATGSLSGKP) are enriched in polar residues. The segment at 2987–3122 (TGSLSGKPTQ…NITIIKPKGN (136 aa)) is has tRNase activity. Catalysis depends on residues Glu3012, Asp3039, Asp3048, and Lys3067.

It in the N-terminal section; belongs to the CdiA toxin family. Interacts with cognate immunity protein CdiI, which blocks its tRNA nuclease activity. The truncated CT fragment (residues 2948-3122) specifically interacts with cognate CdiI which inhibits the tRNA nuclease activity. The truncated CT is more stable in vitro than the original CT fragment characterized in E.coli.

The protein resides in the membrane. It localises to the secreted. Its subcellular location is the target cell. It is found in the target cell cytoplasm. In terms of biological role, toxic component of a toxin-immunity protein module, which functions as a cellular contact-dependent growth inhibition (CDI) system. CDI modules allow bacteria to communicate with and inhibit the growth of closely related neighboring bacteria in a contact-dependent fashion. The C-terminal 301 residues (the CT fragment) cleaves near the C-terminus of E.coli tRNA1B(Ala), probably preventing tRNA charging, and inhibits growth in E.coli. A truncated CT fragment (residues 2948-3122) has tRNA endonuclease activity on several B.thailandensis tRNAs as well as tRNA2(Arg) where it cleaves after A-70 and U-71. Inactive CT domain binds tRNA, probably in a 1:1 complex. Toxic activity is neutralized by coexpression of the cognate immunity protein CdiI in E.coli, but not by non-cognate immunity proteins from other strains of B.pseudomallei. May use lipopolysaccharide as its target cell receptor. Probably gains access to the cytoplasm of target cells (B.thailandensis strain E264) by using integral inner membrane protein BTH_II0599. Protein BTH_I0359 is also implicated in an unknown fashion in CDI in B.thailandensis strain E264. Expression of this cdiAIB locus in B.thailandensis confers protection against other bacteria carrying the locus; growth inhibition requires cellular contact. Functionally, the CdiA protein is thought to be exported from the cell through the central lumen of CdiB, the other half of its two-partner system (TPS). The TPS domain probably remains associated with CdiB while the FHA-1 domain forms an extended filament with the receptor-binding domain (RBD) at its extremity; in the secretion arrested state the C-terminus of the RBD domain form a hairpin-like structure as the FHA-2, PT and CT domains are periplasmic. Upon binding to a target cell outer membrane receptor (possibly a lipoprotein in this CDI) a signal is transmitted to activate secretion. The filament elongates slightly, the rest of CdiA is secreted and the FHA-2 domain becomes stably associated with the target cell's outer membrane where it facilitates entry of the toxic CT domain into the target cell periplasm. From there the toxic CT domain is cleaved and gains access to the target cell cytoplasm via an inner membrane protein (probably inner membrane protein BTH_II0599). The chain is tRNA nuclease CdiA-2 (cdiA2) from Burkholderia pseudomallei (strain 1026b).